The primary structure comprises 853 residues: Aminotransferase PigE (853 aa).

503–504 (GT) contacts pyridoxal 5'-phosphate. An N6-(pyridoxal phosphate)lysine modification is found at Lys-645. Pyridoxal 5'-phosphate is bound at residue Thr-680.

It belongs to the class-III pyridoxal-phosphate-dependent aminotransferase family. In terms of assembly, homodimer. The cofactor is pyridoxal 5'-phosphate.

It functions in the pathway antibiotic biosynthesis; prodigiosin biosynthesis. Its function is as follows. Involved in the biosynthesis of 2-methyl-3-n-amyl-pyrrole (MAP), one of the terminal products involved in the biosynthesis of the red antibiotic prodigiosin (Pig). Catalyzes the transamination to the aldehyde group of 3-acetyloctanal, resulting in an aminoketone, which spontaneously cyclizes to yield the dihydro form of MAP (H2MAP). The protein is Aminotransferase PigE of Serratia sp. (strain FS14).